A 357-amino-acid polypeptide reads, in one-letter code: Enoyl-[acyl-carrier-protein] reductase, mitochondrial (357 aa).

Residues 1-19 constitute a mitochondrion transit peptide; sequence MLRRGFLSRINAAQWSRQM. An Enoyl reductase (ER) domain is found at 36 to 352; the sequence is EVLQLVEDKL…FKGFTGKKYI (317 aa). The Proton donor role is filled by tyrosine 74. NADP(+)-binding positions include asparagine 147, 173–176, 196–198, 264–267, 289–291, lysine 349, and lysine 350; these read NSAV, RDR, YGGM, and FWM.

This sequence belongs to the zinc-containing alcohol dehydrogenase family. Quinone oxidoreductase subfamily. As to quaternary structure, homodimer. In terms of tissue distribution, expressed in the central nervous system.

The protein resides in the mitochondrion. The enzyme catalyses a 2,3-saturated acyl-[ACP] + NADP(+) = a (2E)-enoyl-[ACP] + NADPH + H(+). Functionally, catalyzes the NADPH-dependent reduction of trans-2-enoyl thioesters in mitochondrial fatty acid synthesis (fatty acid synthesis type II). Fatty acid chain elongation in mitochondria uses acyl carrier protein (ACP) as an acyl group carrier, but the enzyme accepts both ACP and CoA thioesters as substrates in vitro. Involved in iron homeostasis; affecting Fe-S cluster assembly and ceramide metabolism. Required for proper morphology and bioenergetic functions of mitochondria. Required for maintenance of neurons, including photoreceptor neurons. The protein is Enoyl-[acyl-carrier-protein] reductase, mitochondrial of Drosophila melanogaster (Fruit fly).